Here is a 193-residue protein sequence, read N- to C-terminus: dCTP deaminase (193 aa).

Residues 110 to 115, Asp128, 136 to 138, Tyr171, Lys178, and Gln182 each bind dCTP; these read RSSLAR and VLE. Catalysis depends on Glu138, which acts as the Proton donor/acceptor. A disordered region spans residues 169–193; sequence RPYNRREDAKYRNQQGAVASRIDKD.

Belongs to the dCTP deaminase family. Homotrimer.

The enzyme catalyses dCTP + H2O + H(+) = dUTP + NH4(+). It participates in pyrimidine metabolism; dUMP biosynthesis; dUMP from dCTP (dUTP route): step 1/2. Its function is as follows. Catalyzes the deamination of dCTP to dUTP. This chain is dCTP deaminase, found in Sodalis glossinidius (strain morsitans).